The chain runs to 473 residues: Pyruvate kinase (473 aa).

Arginine 32 contributes to the substrate binding site. Residues asparagine 34, serine 36, aspartate 66, and threonine 67 each coordinate K(+). 34 to 37 is an ATP binding site; the sequence is NFSH. Residues arginine 73 and lysine 155 each contribute to the ATP site. Position 221 (glutamate 221) interacts with Mg(2+). Positions 244, 245, and 277 each coordinate substrate. Aspartate 245 is a Mg(2+) binding site.

The protein belongs to the pyruvate kinase family. Homotetramer. Requires Mg(2+) as cofactor. The cofactor is K(+).

It catalyses the reaction pyruvate + ATP = phosphoenolpyruvate + ADP + H(+). Its pathway is carbohydrate degradation; glycolysis; pyruvate from D-glyceraldehyde 3-phosphate: step 5/5. This is Pyruvate kinase (pyk) from Clostridium acetobutylicum (strain ATCC 824 / DSM 792 / JCM 1419 / IAM 19013 / LMG 5710 / NBRC 13948 / NRRL B-527 / VKM B-1787 / 2291 / W).